The following is a 488-amino-acid chain: Beta-amylase (488 aa).

Substrate is bound by residues aspartate 51, histidine 91, and aspartate 99. The active-site Proton donor is the glutamate 184. The substrate site is built by lysine 293, histidine 298, and threonine 340. Glutamate 378 (proton acceptor) is an active-site residue. Substrate-binding positions include 379–380 (NA) and arginine 418.

This sequence belongs to the glycosyl hydrolase 14 family.

The catalysed reaction is Hydrolysis of (1-&gt;4)-alpha-D-glucosidic linkages in polysaccharides so as to remove successive maltose units from the non-reducing ends of the chains.. This is Beta-amylase (BMY1) from Zea mays (Maize).